Reading from the N-terminus, the 138-residue chain is Putative pre-16S rRNA nuclease (138 aa).

The protein belongs to the YqgF nuclease family.

The protein localises to the cytoplasm. Functionally, could be a nuclease involved in processing of the 5'-end of pre-16S rRNA. In Glaesserella parasuis serovar 5 (strain SH0165) (Haemophilus parasuis), this protein is Putative pre-16S rRNA nuclease.